A 275-amino-acid chain; its full sequence is Shikimate dehydrogenase (NADP(+)) (275 aa).

Shikimate contacts are provided by residues 16–18 and T63; that span reads SKS. K67 serves as the catalytic Proton acceptor. Residues N88 and D104 each contribute to the shikimate site. NADP(+) contacts are provided by residues 129–133, 153–158, and M219; these read GAGGA and NRTVAR. Residue Y221 coordinates shikimate. G243 lines the NADP(+) pocket.

This sequence belongs to the shikimate dehydrogenase family. In terms of assembly, homodimer.

The catalysed reaction is shikimate + NADP(+) = 3-dehydroshikimate + NADPH + H(+). It functions in the pathway metabolic intermediate biosynthesis; chorismate biosynthesis; chorismate from D-erythrose 4-phosphate and phosphoenolpyruvate: step 4/7. Functionally, involved in the biosynthesis of the chorismate, which leads to the biosynthesis of aromatic amino acids. Catalyzes the reversible NADPH linked reduction of 3-dehydroshikimate (DHSA) to yield shikimate (SA). The sequence is that of Shikimate dehydrogenase (NADP(+)) from Marinobacter nauticus (strain ATCC 700491 / DSM 11845 / VT8) (Marinobacter aquaeolei).